The sequence spans 76 residues: Kappa-actitoxin-Avd4a (76 aa).

The first 19 residues, 1–19, serve as a signal peptide directing secretion; sequence MNKALFLCLVVLCAAVVFA. The propeptide occupies 20–31; the sequence is AEDLQKAKHAPF. Disulfide bonds link Cys37–Cys72, Cys39–Cys65, and Cys55–Cys73.

It belongs to the sea anemone type 3 (BDS) potassium channel toxin family. In terms of tissue distribution, highly expressed in the ectodermal tissue from the distal and proximal tentacles, body wall, and oral disk.

Its subcellular location is the secreted. It localises to the nematocyst. In terms of biological role, acts as a gating modifier on both Kv and Nav ion channels, and also acts on blood pressure. Voltage-dependently inhibits voltage-gated potassium channels Kv3 (Kv3.1/KCNC1, Kv3.2/KCNC2 and Kv3.4/KCNC4) and slows inactivation of the voltage-gated sodium channel Nav1.7/SCN9A. Inhibits all Kv3.1, Kv3.2 and Kv3.4 by about 50% when tested at a voltage of +40 mV (45%, 48% and 56%, respectively). May act by binding residues in voltage-sensing domains S3b and S4 of Kv3. On sodium channels, tests have been done on human Nav1.7/SCN9A (expressed in HEK293 cells) (EC(50)=3 nM) and rat SCG neurons that mostly carry Nav1.7 channels (EC(50)=300 nM). This toxin also reduces blood pressure. The sequence is that of Kappa-actitoxin-Avd4a from Anemonia viridis (Snakelocks anemone).